A 307-amino-acid polypeptide reads, in one-letter code: D-alanine--D-alanine ligase (307 aa).

The ATP-grasp domain maps to 104–301 (RTAFLAAGLP…FVSLCRWMVE (198 aa)). 130 to 183 (PLPRPFVIKPANEGSAVGVHILHEGDNRRTEIARSWSFGGQALVEEYIPGRELT) contributes to the ATP binding site. 3 residues coordinate Mg(2+): Asp251, Glu268, and Asn270.

This sequence belongs to the D-alanine--D-alanine ligase family. The cofactor is Mg(2+). Mn(2+) serves as cofactor.

The protein localises to the cytoplasm. It catalyses the reaction 2 D-alanine + ATP = D-alanyl-D-alanine + ADP + phosphate + H(+). The protein operates within cell wall biogenesis; peptidoglycan biosynthesis. In terms of biological role, cell wall formation. The protein is D-alanine--D-alanine ligase of Granulibacter bethesdensis (strain ATCC BAA-1260 / CGDNIH1).